Consider the following 471-residue polypeptide: Putative multidrug resistance protein MdtD (471 aa).

Residues 1-11 (MTDLPDSTRWQ) lie on the Periplasmic side of the membrane. A helical membrane pass occupies residues 12–32 (LWIVAFGFFMQSLDTTIVNTA). Residues 33–48 (LPSMAQSLGESPLHMH) are Cytoplasmic-facing. The helical transmembrane segment at 49-69 (MVIVSYVLTVAVMLPASGWLA) threads the bilayer. The Periplasmic portion of the chain corresponds to 70-76 (DKVGVRN). Residues 77–97 (IFFTAIVLFTLGSLFCALSGT) traverse the membrane as a helical segment. Over 98 to 101 (LNEL) the chain is Cytoplasmic. The helical transmembrane segment at 102-124 (LLARALQGVGGAMMVPVGRLTVM) threads the bilayer. Topologically, residues 125-137 (KIVPREQYMAAMT) are periplasmic. The chain crosses the membrane as a helical span at residues 138 to 158 (FVTLPGQVGPLLGPALGGLLV). Over 159-164 (EYASWH) the chain is Cytoplasmic. Residues 165–185 (WIFLINIPVGIIGAIATLMLM) form a helical membrane-spanning segment. Topologically, residues 186–196 (PNYTMQTRRFD) are periplasmic. The helical transmembrane segment at 197–217 (LSGFLLLAVGMAVLTLALDGS) threads the bilayer. Over 218–224 (KGTGLSP) the chain is Cytoplasmic. A helical transmembrane segment spans residues 225-245 (LTIAGLVAVGVVALVLYLLHA). Over 246–262 (RNNNRALFSLKLFRTRT) the chain is Periplasmic. The chain crosses the membrane as a helical span at residues 263 to 283 (FSLGLAGSFAGRIGSGMLPFM). At 284 to 285 (TP) the chain is on the cytoplasmic side. A helical transmembrane segment spans residues 286-306 (VFLQIGLGFSPFHAGLMMIPM). Topologically, residues 307–341 (VLGSMGMKRIVVQVVNCFGYRRVLVATTLGLSLVT) are periplasmic. A helical membrane pass occupies residues 342-362 (LLFMTTALLGWYYVLPFVLFL). Residues 363–395 (QGMVNSTRFSSMNTLTLKDLPDNLASSGNSLLS) are Cytoplasmic-facing. Residues 396–416 (MIMQLSMSIGVTIAGLLLGLF) form a helical membrane-spanning segment. Residues 417–430 (GSQHVSVDSGTTQT) lie on the Periplasmic side of the membrane. Residues 431 to 451 (VFMYTWLSMALIIALPAFIFA) traverse the membrane as a helical segment. Over 452–471 (RVPNDTHQNVAISRRKRSAQ) the chain is Cytoplasmic.

It belongs to the major facilitator superfamily. TCR/Tet family.

The protein localises to the cell inner membrane. The chain is Putative multidrug resistance protein MdtD from Escherichia coli O139:H28 (strain E24377A / ETEC).